We begin with the raw amino-acid sequence, 175 residues long: MAQSQSWARRCFKAFCKGFFVAVPVAVTFLDRVACVARVEGSSMQPSLNPGGSQSSDVVLLNHWKVRNFEVQRGDIVSLVSPKNPEQKIIKRVIALEGDIVRTIGHKNRLVKVPRGHMWVEGDHHGHSFDSNSFGPVSLGLLHAHATHILWPPERWQRLESVLPPERCPLQTGEK.

Residues 19–37 (FFVAVPVAVTFLDRVACVA) form a helical membrane-spanning segment. Catalysis depends on residues Ser43 and Lys91.

It belongs to the peptidase S26 family. IMP2 subfamily. Heterodimer of 2 subunits, IMMPL1 and IMMPL2.

It is found in the mitochondrion inner membrane. In terms of biological role, catalyzes the removal of transit peptides required for the targeting of proteins from the mitochondrial matrix, across the inner membrane, into the inter-membrane space. Known to process the nuclear encoded protein DIABLO. The protein is Mitochondrial inner membrane protease subunit 2 (Immp2l) of Mus musculus (Mouse).